The chain runs to 376 residues: Glutamate 5-kinase (376 aa).

ATP is bound at residue Lys-23. 3 residues coordinate substrate: Ser-63, Asp-150, and Asn-162. ATP is bound by residues 182-183 and 222-228; these read SD and TGGMASK. Residues 284-358 form the PUA domain; that stretch reads GGALRIDAGA…GKQTAQLPEG (75 aa).

Belongs to the glutamate 5-kinase family.

The protein resides in the cytoplasm. The catalysed reaction is L-glutamate + ATP = L-glutamyl 5-phosphate + ADP. Its pathway is amino-acid biosynthesis; L-proline biosynthesis; L-glutamate 5-semialdehyde from L-glutamate: step 1/2. In terms of biological role, catalyzes the transfer of a phosphate group to glutamate to form L-glutamate 5-phosphate. In Corynebacterium diphtheriae (strain ATCC 700971 / NCTC 13129 / Biotype gravis), this protein is Glutamate 5-kinase.